The chain runs to 105 residues: Large ribosomal subunit protein uL24 (105 aa).

Belongs to the universal ribosomal protein uL24 family. Part of the 50S ribosomal subunit.

One of two assembly initiator proteins, it binds directly to the 5'-end of the 23S rRNA, where it nucleates assembly of the 50S subunit. Its function is as follows. One of the proteins that surrounds the polypeptide exit tunnel on the outside of the subunit. In Dictyoglomus turgidum (strain DSM 6724 / Z-1310), this protein is Large ribosomal subunit protein uL24.